A 139-amino-acid chain; its full sequence is Actin-depolymerizing factor 7 (139 aa).

An ADF-H domain is found at glycine 7 to asparagine 139.

It belongs to the actin-binding proteins ADF family.

In terms of biological role, actin-depolymerizing protein. Severs actin filaments (F-actin) and binds to actin monomers. The protein is Actin-depolymerizing factor 7 (ADF7) of Oryza sativa subsp. japonica (Rice).